The chain runs to 395 residues: Yellow-related salivary protein M35 (395 aa).

The first 18 residues, 1-18, serve as a signal peptide directing secretion; that stretch reads MKLILTVLAFLSLQVALS.

This sequence belongs to the major royal jelly protein family. In terms of tissue distribution, salivary gland (at protein level).

The protein localises to the secreted. Its function is as follows. Probably modulates blood feeding of sand flies on vertebrate species by binding and sequestering different mediators involved in the host response. Functions as a chemoattractant for host neutrophils; likely acts through a G-protein-coupled receptor and effect is dependent on calcium influx and phosphatidylinositol 3-kinases (PI3K) activity. (Microbial infection) Probably enhances infection caused by Leishmania species in the host through augmentation of host neutrophil recruitment into the skin. The chain is Yellow-related salivary protein M35 from Phlebotomus duboscqi (Sandfly).